A 121-amino-acid polypeptide reads, in one-letter code: Small ribosomal subunit protein uS13 (121 aa).

A disordered region spans residues 96-121 (PVRGQNTKNNARTRKGKAVAIAGKKK). The span at 106-121 (ARTRKGKAVAIAGKKK) shows a compositional bias: basic residues.

It belongs to the universal ribosomal protein uS13 family. Part of the 30S ribosomal subunit. Forms a loose heterodimer with protein S19. Forms two bridges to the 50S subunit in the 70S ribosome.

In terms of biological role, located at the top of the head of the 30S subunit, it contacts several helices of the 16S rRNA. In the 70S ribosome it contacts the 23S rRNA (bridge B1a) and protein L5 of the 50S subunit (bridge B1b), connecting the 2 subunits; these bridges are implicated in subunit movement. Contacts the tRNAs in the A and P-sites. The protein is Small ribosomal subunit protein uS13 of Streptococcus agalactiae serotype Ia (strain ATCC 27591 / A909 / CDC SS700).